Reading from the N-terminus, the 141-residue chain is NADH-quinone oxidoreductase subunit A (141 aa).

3 consecutive transmembrane segments (helical) span residues 24 to 44, 77 to 97, and 106 to 126; these read LLAL…LLLA, VPFY…AFIA, and LGWA…VALI.

The protein belongs to the complex I subunit 3 family. In terms of assembly, NDH-1 is composed of 14 different subunits. Subunits NuoA, H, J, K, L, M, N constitute the membrane sector of the complex.

The protein localises to the cell inner membrane. The catalysed reaction is a quinone + NADH + 5 H(+)(in) = a quinol + NAD(+) + 4 H(+)(out). In terms of biological role, NDH-1 shuttles electrons from NADH, via FMN and iron-sulfur (Fe-S) centers, to quinones in the respiratory chain. The immediate electron acceptor for the enzyme in this species is believed to be ubiquinone. Couples the redox reaction to proton translocation (for every two electrons transferred, four hydrogen ions are translocated across the cytoplasmic membrane), and thus conserves the redox energy in a proton gradient. The sequence is that of NADH-quinone oxidoreductase subunit A from Syntrophotalea carbinolica (strain DSM 2380 / NBRC 103641 / GraBd1) (Pelobacter carbinolicus).